The sequence spans 1032 residues: MALIMEPVSKWSPSQVVDWMKGLDDCLQQYIKNFEREKISGDQLLRITHQELEDLGVSRIGHQELILEAVDLLCALNYGLETENLKTLSHKLNASAKNLQNFITGRRRSGHYDGRTSRKLPNDFLTSVVDLIGAAKSLLAWLDRSPFAAVTDYSVTRNNVIQLCLELTTIVQQDCTVYETENKILHVCKTLSGVCDHIISLSSDPLVSQSAHLEVIQLANIKPSEGLGMYIKSTYDGLHVITGTTENSPADRCKKIHAGDEVIQVNHQTVVGWQLKNLVNALREDPSGVILTLKKRPQSMLTSAPALLKNMRWKPLALQPLIPRSPTSSVATPSSTISTPTKRDSSALQDLYIPPPPAEPYIPRDEKGNLPCEDLRGHMVGKPVHKGSESPNSFLDQEYRKRFNIVEEDTVLYCYEYEKGRSSSQGRRESTPTYGKLRPISMPVEYNWVGDYEDPNKMKRDSRRENSLLRYMSNEKIAQEEYMFQRNSKKDTGKKSKKKGDKSNSPAHYSLLPSLQMDALRQDIMGTPVPETTLYHTFQQSSLQHKSKKKNKGAISGKSKRRISCKDLGRGDCEGWLWKKKDAKSYFSQKWKKYWFVLKDASLYWYINEEDEKAEGFISLPEFKIDRASECRKKYAFKACHPKIKSFYFAAEHLDDMNRWLNRINMLTAGYAERERIKQEQDYWSESDKEEADTPSTPKQDSPPPPYDTYPRPPSMSCASPYVEAKHSRLSSTETSQSQSSHEEFRQEVTGSSAVSPIRKTASQRRSWQDLIETPLTSSGLHYLQTLPLEDSVFSDSAAISPEHRRQSTLPTQKCHLQDHYGPYPLAESERMQVLNGNGGKPRSFTLPRDSGFNHCCLNTPVSACDPQDDIQPPEVEEEEEEEEEEAAGENVGEKNENREEKLGDSLQDLYRALEEASLSPLGEHRISTKMEYKLSFIKRCNDPVMNEKLHRLRILKSTLKAREGEVAIIDKVLDNPDLTSKEFQQWKQMYLDLFLDICQSTTSNDPLSISSEVDVLTSSLTHTHSYIETHV.

In terms of domain architecture, SAM spans 11–76; sequence WSPSQVVDWM…LEAVDLLCAL (66 aa). Phosphoserine is present on Ser12. The 95-residue stretch at 84-178 folds into the CRIC domain; it reads NLKTLSHKLN…TIVQQDCTVY (95 aa). The PDZ domain maps to 215-297; that stretch reads VIQLANIKPS…GVILTLKKRP (83 aa). In terms of domain architecture, DUF1170 spans 302-515; the sequence is TSAPALLKNM…PAHYSLLPSL (214 aa). Over residues 324-340 the composition is skewed to low complexity; the sequence is RSPTSSVATPSSTISTP. Residues 324 to 349 form a disordered region; sequence RSPTSSVATPSSTISTPTKRDSSALQ. A phosphoserine mark is found at Ser338 and Ser390. Disordered regions lie at residues 480–509 and 538–558; these read EEYM…PAHY and FQQS…ISGK. Over residues 545-558 the composition is skewed to basic residues; it reads HKSKKKNKGAISGK. The PH domain maps to 570-669; the sequence is RGDCEGWLWK…WLNRINMLTA (100 aa). The disordered stretch occupies residues 682 to 766; sequence DYWSESDKEE…PIRKTASQRR (85 aa). At Tyr683 the chain carries Phosphotyrosine. Positions 683 to 693 are enriched in acidic residues; it reads YWSESDKEEAD. 2 positions are modified to phosphoserine: Ser685 and Ser687. The span at 701-714 shows a compositional bias: pro residues; that stretch reads DSPPPPYDTYPRPP. Over residues 730-740 the composition is skewed to low complexity; that stretch reads LSSTETSQSQS. A phosphoserine mark is found at Ser756 and Ser767. The disordered stretch occupies residues 864–900; sequence ACDPQDDIQPPEVEEEEEEEEEEAAGENVGEKNENRE. Positions 874 to 917 form a coiled coil; sequence PEVEEEEEEEEEEAAGENVGEKNENREEKLGDSLQDLYRALEEA. Residues 875–888 show a composition bias toward acidic residues; the sequence is EVEEEEEEEEEEAA. Residue Ser906 is modified to Phosphoserine.

The protein belongs to the CNKSR family. Interacts with RAF1, RAB2L and RAL GTPase proteins. Phosphorylated on tyrosine.

The protein localises to the cytoplasm. It localises to the membrane. Its function is as follows. May function as an adapter protein or regulator of Ras signaling pathways. The sequence is that of Connector enhancer of kinase suppressor of ras 2 (Cnksr2) from Mus musculus (Mouse).